The sequence spans 323 residues: Biotin synthase (323 aa).

The region spanning 46 to 264 (TEIQLSSLLS…IAVARITMPR (219 aa)) is the Radical SAM core domain. [4Fe-4S] cluster-binding residues include Cys61, Cys65, and Cys68. Residues Cys105, Cys136, Cys196, and Arg268 each contribute to the [2Fe-2S] cluster site.

The protein belongs to the radical SAM superfamily. Biotin synthase family. As to quaternary structure, homodimer. Requires [4Fe-4S] cluster as cofactor. [2Fe-2S] cluster is required as a cofactor.

The enzyme catalyses (4R,5S)-dethiobiotin + (sulfur carrier)-SH + 2 reduced [2Fe-2S]-[ferredoxin] + 2 S-adenosyl-L-methionine = (sulfur carrier)-H + biotin + 2 5'-deoxyadenosine + 2 L-methionine + 2 oxidized [2Fe-2S]-[ferredoxin]. The protein operates within cofactor biosynthesis; biotin biosynthesis; biotin from 7,8-diaminononanoate: step 2/2. Its function is as follows. Catalyzes the conversion of dethiobiotin (DTB) to biotin by the insertion of a sulfur atom into dethiobiotin via a radical-based mechanism. This chain is Biotin synthase, found in Bordetella avium (strain 197N).